Here is a 132-residue protein sequence, read N- to C-terminus: Transcriptional repressor SmtB homolog (132 aa).

Zn(2+) contacts are provided by C20, H26, C71, C73, D114, H116, H127, and E130. Residues 38-132 (MSLDQAQQMA…EVADHLQESD (95 aa)) enclose the HTH arsR-type domain. Positions 72–91 (VCDLAAAMKVSESAVSHQLR) form a DNA-binding region, H-T-H motif.

In terms of assembly, homodimer.

Functionally, transcriptional repressor of the expression of the ziaA gene. Controls zinc homeostasis by triggering ZiaA-mediated efflux of excess zinc into the periplasm. The sequence is that of Transcriptional repressor SmtB homolog (ziaR) from Synechocystis sp. (strain ATCC 27184 / PCC 6803 / Kazusa).